We begin with the raw amino-acid sequence, 352 residues long: Endophilin-A1 (352 aa).

The tract at residues 1 to 21 (MSVAGLKKQFHKATQKVSEKV) is membrane-binding amphipathic helix. Positions 1-27 (MSVAGLKKQFHKATQKVSEKVGGAEGT) are disordered. Positions 1–125 (MSVAGLKKQF…EVGEAMRELS (125 aa)) are binds and tubulates liposomes. Residues 18–249 (SEKVGGAEGT…LEERIRQASS (232 aa)) enclose the BAR domain. Residues 60–87 (PNPASRAKLSMINTMSKIRGQEKGPGYP) form a required for dimerization upon membrane association region. Positions 181-248 (EELRQALEKF…RLEERIRQAS (68 aa)) form a coiled coil. S262 is subject to Phosphoserine. Residues 264–289 (EFATGDSTQPNGGLSHTGTPKPPGVQ) form a disordered region. Positions 268-281 (GDSTQPNGGLSHTG) are enriched in polar residues. In terms of domain architecture, SH3 spans 290 to 349 (MDQPCCRALYDFEPENEGELGFKEGDIITLTNQIDENWYEGMLHGQSGFFPINYVEILVA). At Y299 the chain carries Phosphotyrosine.

This sequence belongs to the endophilin family. In terms of assembly, monomer; in cytoplasm. Homodimer; when associated with membranes. Interacts with SYNJ1. Interacts with DNM1. Interacts with MAP4K3; the interaction appears to regulate MAP4K3-mediated JNK activation. Interacts with OPHN1. Interacts with PDCD6IP. Interacts with BIN2. Interacts with ATXN2. Interacts with ADAM9 and ADAM15 cytoplasmic tails. Interacts with TMEM108. Interacts with ADGRB2.

The protein resides in the cytoplasm. The protein localises to the membrane. It is found in the early endosome. It localises to the presynapse. Implicated in synaptic vesicle endocytosis. May recruit other proteins to membranes with high curvature. Required for BDNF-dependent dendrite outgrowth. Cooperates with SH3GL2 to mediate BDNF-NTRK2 early endocytic trafficking and signaling from early endosomes. This is Endophilin-A1 (Sh3gl2) from Mus musculus (Mouse).